A 1298-amino-acid chain; its full sequence is Histone-lysine N-methyltransferase EHMT1 (1298 aa).

Disordered stretches follow at residues 1–111 (MAAA…HVTA) and 144–192 (ASSL…RKLP). Alanine 2 is subject to N-acetylalanine. Lysine 22 is covalently cross-linked (Glycyl lysine isopeptide (Lys-Gly) (interchain with G-Cter in SUMO1); alternate). Lysine 22 is covalently cross-linked (Glycyl lysine isopeptide (Lys-Gly) (interchain with G-Cter in SUMO2); alternate). The span at 38-50 (SAEKQAGEAHMAA) shows a compositional bias: basic and acidic residues. 2 stretches are compositionally biased toward polar residues: residues 54-67 (TNGS…SSHA) and 76-89 (SARV…NTLT). Residues 96 to 105 (VSERDSEAAK) are compositionally biased toward basic and acidic residues. Residues lysine 190, lysine 199, lysine 231, lysine 234, lysine 317, and lysine 327 each participate in a glycyl lysine isopeptide (Lys-Gly) (interchain with G-Cter in SUMO2) cross-link. The disordered stretch occupies residues 211–234 (VVGLHAASKDPREVREARDHKEPK). A compositionally biased stretch (basic and acidic residues) spans 217–234 (ASKDPREVREARDHKEPK). The interval 339–479 (VNGESLEMDS…QTAPGDSTGY (141 aa)) is disordered. Over residues 344–360 (LEMDSDEDDSEELEEDD) the composition is skewed to acidic residues. Over residues 373–393 (EDSRTSKESMSEADRAQKMDG) the composition is skewed to basic and acidic residues. Acidic residues predominate over residues 394-416 (ESEEEQESVDTGEEEEGGDESDL). A Glycyl lysine isopeptide (Lys-Gly) (interchain with G-Cter in SUMO2) cross-link involves residue lysine 432. Serine 435 carries the post-translational modification Phosphoserine. Over residues 440-452 (PARKRRRRSRKKP) the composition is skewed to basic residues. Residues 460–474 (SYKSSAGSAEQTAPG) are compositionally biased toward polar residues. At serine 483 the chain carries Phosphoserine. Residues lysine 492, lysine 559, lysine 644, lysine 659, lysine 684, and lysine 731 each participate in a glycyl lysine isopeptide (Lys-Gly) (interchain with G-Cter in SUMO2) cross-link. The segment at 644 to 717 (KADTTSTVTP…TPGLSQGPGK (74 aa)) is disordered. ANK repeat units lie at residues 737-766 (FHPK…DPNF), 772-801 (NKRS…NIDT), 805-834 (DQRT…LVDP), 838-868 (EGST…DVNC), 872-901 (GGWT…DINI), 905-934 (EENI…DLHA), 938-967 (HGDS…DVTL), and 971-1004 (EGET…DRPS). Residues 905–907 (EEN) form a histone H3K9me binding region. A phosphoserine mark is found at serine 1004 and serine 1048. The Pre-SET domain maps to 1060–1123 (QYCVCIDDCS…NCRNRVVQNG (64 aa)). Cysteine 1062, cysteine 1064, cysteine 1068, cysteine 1073, cysteine 1075, cysteine 1105, cysteine 1109, cysteine 1111, and cysteine 1115 together coordinate Zn(2+). In terms of domain architecture, SET spans 1126–1243 (ARLQLYRTRD…AGEQLGFDYG (118 aa)). Residues 1136–1138 (MGW), tyrosine 1173, and 1200–1201 (NH) each bind S-adenosyl-L-methionine. Positions 1162 to 1181 (DSEADVREEDSYLFDLDNKD) are interaction with histone H3. Residue cysteine 1203 coordinates Zn(2+). The interval 1242–1245 (YGER) is interaction with histone H3. Cysteine 1256 serves as a coordination point for Zn(2+). Arginine 1257 contributes to the S-adenosyl-L-methionine binding site. Residues cysteine 1258 and cysteine 1263 each contribute to the Zn(2+) site. Positions 1274 to 1298 (QASAAQEAQEDGLPDTSSAAAADPL) are disordered.

It belongs to the class V-like SAM-binding methyltransferase superfamily. As to quaternary structure, heterodimer; heterodimerizes with EHMT2. Interacts with WIZ and EHMT2. Part of the E2F6.com-1 complex in G0 phase composed of E2F6, MGA, MAX, TFDP1, CBX3, BAT8, EHMT1, RING1, RNF2, MBLR, L3MBTL2 and YAF2. Interacts (via ANK repeats) with RELA (when monomethylated at 'Lys-310'). Interacts with MPHOSPH8. Interacts with CDYL. Interacts with REST only in the presence of CDYL. Part of a complex containing at least CDYL, REST, WIZ, SETB1, EHMT1 and EHMT2. Interacts with BAZ2B. Widely expressed.

The protein localises to the nucleus. The protein resides in the chromosome. The catalysed reaction is N(6)-methyl-L-lysyl(9)-[histone H3] + S-adenosyl-L-methionine = N(6),N(6)-dimethyl-L-lysyl(9)-[histone H3] + S-adenosyl-L-homocysteine + H(+). It carries out the reaction L-lysyl(9)-[histone H3] + S-adenosyl-L-methionine = N(6)-methyl-L-lysyl(9)-[histone H3] + S-adenosyl-L-homocysteine + H(+). With respect to regulation, methyltransferase activity is inhibited by BIX-01294. Efficiently inhibited by compound E72, a BIX-01294 derivative in which the diazepane ring and the benzyl are replaced with a 3-dimethylaminopropyl and a 5-aminopentyl group at sites B and C, respectively. Functionally, histone methyltransferase that specifically mono- and dimethylates 'Lys-9' of histone H3 (H3K9me1 and H3K9me2, respectively) in euchromatin. H3K9me represents a specific tag for epigenetic transcriptional repression by recruiting HP1 proteins to methylated histones. Also weakly methylates 'Lys-27' of histone H3 (H3K27me). Also required for DNA methylation, the histone methyltransferase activity is not required for DNA methylation, suggesting that these 2 activities function independently. Probably targeted to histone H3 by different DNA-binding proteins like E2F6, MGA, MAX and/or DP1. During G0 phase, it probably contributes to silencing of MYC- and E2F-responsive genes, suggesting a role in G0/G1 transition in cell cycle. In addition to the histone methyltransferase activity, also methylates non-histone proteins: mediates dimethylation of 'Lys-373' of p53/TP53. Represses the expression of mitochondrial function-related genes, perhaps by occupying their promoter regions, working in concert with probable chromatin reader BAZ2B. The sequence is that of Histone-lysine N-methyltransferase EHMT1 (EHMT1) from Homo sapiens (Human).